The sequence spans 185 residues: MECEACIGMGKDCNSWMKTCAAHEDTCVTFQTEVIAAPVSLTVIFKACGVSDTCHLDYMETTLHDKVKVRIKRSCCTGEDCPLPPFPGLGFQVNRPNRLHCPACIGLFSKECTEHLVSCRASENQCLTVTGKEFGLFFRALSYKGCATESLCALLKKRFWDGLEDIEVDFKCTPALPPPSLASDV.

8 disulfide bridges follow: C3–C27, C6–C13, C20–C48, C54–C75, C76–C81, C101–C126, C119–C146, and C152–C172.

Belongs to the CNF-like-inhibitor family. Heterodimer with phospholipase A2 inhibitor 31 kDa. In terms of tissue distribution, expressed by the liver.

It is found in the secreted. In terms of biological role, inhibits the enzymatic activity of phospholipase A2. The protein is Phospholipase A2 inhibitor 25 kDa subunit of Naja kaouthia (Monocled cobra).